A 289-amino-acid chain; its full sequence is Iodotyrosine deiodinase 1 (289 aa).

Residues 1–21 traverse the membrane as a helical segment; the sequence is MYFLTPILVAILCILVVWIFK. Residues 47–58 show a composition bias toward basic and acidic residues; that stretch reads DLKDSSDLHQAE. Positions 47-69 are disordered; that stretch reads DLKDSSDLHQAEEDADEWQESEE. Positions 59–69 are enriched in acidic residues; it reads EDADEWQESEE. FMN is bound by residues 100 to 104, Ser-128, and 128 to 129; these read RRSVR and SG. The 3,5-diiodo-L-tyrosine site is built by Ala-130, Glu-157, Tyr-161, and Lys-182. 3-iodo-L-tyrosine is bound by residues Ala-130, Glu-157, Tyr-161, and Lys-182. FMN-binding positions include 237–239 and Arg-279; that span reads TTT.

This sequence belongs to the nitroreductase family. Homodimer. It depends on FMN as a cofactor.

It is found in the cell membrane. It localises to the cytoplasmic vesicle membrane. It carries out the reaction 2 iodide + L-tyrosine + 2 NADP(+) = 3,5-diiodo-L-tyrosine + 2 NADPH + H(+). The enzyme catalyses iodide + L-tyrosine + NADP(+) = 3-iodo-L-tyrosine + NADPH. The catalysed reaction is 3-iodo-L-tyrosine + iodide + NADP(+) = 3,5-diiodo-L-tyrosine + NADPH + H(+). It catalyses the reaction L-tyrosine + chloride + NADP(+) = 3-chloro-L-tyrosine + NADPH. It carries out the reaction bromide + L-tyrosine + NADP(+) = 3-bromo-L-tyrosine + NADPH. Its function is as follows. Catalyzes the dehalogenation of halotyrosines such as 3-bromo-L-tyrosine, 3-chloro-L-tyrosine, 3-iodo-L-tyrosine and 3,5-diiodo-L-tyrosine. During thyroid hormone biosynthesis, facilitates iodide salvage by catalysing the oxidative NADPH-dependent deiodination of the halogenated by-products of thyroid hormone production, monoiodotyrosine (L-MIT) and diiodotyrosine (L-DIT). The scavanged iodide can then reenter the hormone-producing pathways. Acts more efficiently on 3-iodo-L-tyrosine than 3,5-diiodo-L-tyrosine. The chain is Iodotyrosine deiodinase 1 (IYD) from Pongo abelii (Sumatran orangutan).